The primary structure comprises 35 residues: Photosystem II reaction center protein T (35 aa).

Residues 3-23 (ALVYTFLLVSTLGIIFFAIFF) form a helical membrane-spanning segment.

The protein belongs to the PsbT family. In terms of assembly, PSII is composed of 1 copy each of membrane proteins PsbA, PsbB, PsbC, PsbD, PsbE, PsbF, PsbH, PsbI, PsbJ, PsbK, PsbL, PsbM, PsbT, PsbY, PsbZ, Psb30/Ycf12, at least 3 peripheral proteins of the oxygen-evolving complex and a large number of cofactors. It forms dimeric complexes.

The protein localises to the plastid. It localises to the chloroplast thylakoid membrane. Found at the monomer-monomer interface of the photosystem II (PS II) dimer, plays a role in assembly and dimerization of PSII. PSII is a light-driven water plastoquinone oxidoreductase, using light energy to abstract electrons from H(2)O, generating a proton gradient subsequently used for ATP formation. In Metasequoia glyptostroboides (Dawn redwood), this protein is Photosystem II reaction center protein T.